A 537-amino-acid chain; its full sequence is MYHIFQISSEVFRAFGLKMKILLTLVFSGLLIWSVVLVSFSNDFNNQLLVATSNVSRESETPRDRLIGGLLTADFDEGSCLSRYQQSLLYRKASPYKPSEYLVSKLRSYEKLHKRCGPGTDAYKKATEILGHDDENYASKSVGECRYIVWVAVYGLGNRILTLASVFLYALLTERVVLVDQSKDISDLFCEPFPGTSWLLPLEFPLMKQIDGYNKGYSRCYGTMLNNQAINSTLIPPHLYLHILHDSRDNDKMFFCQKDQSLVDKVPWLIVKANVYFVPSLWLNPTFQTELMKLFPQKEAVFHHLARYLFHPTNQVWGLITRSYNAYLSRADETLGIQIRVFSDRAGYFQHVMDQVVACTRRENLLPEPAAQEEPKVNISRSQKLKAVLVTSLYPEYSETLKNMYWERPSSTGEIIEVYQPSGERVQQTDKKLHDQKALAEMYLLSLTDKIVTSARSTFGYVAHSLGGLKPWLLYQPTGPTAPDPPCIQSTSMDPCHLTPPSHGCEPEWGTNSGKVVPFVRHCEDRGNDGLKLFDEL.

Residues 1 to 20 (MYHIFQISSEVFRAFGLKMK) lie on the Cytoplasmic side of the membrane. The chain crosses the membrane as a helical; Signal-anchor for type II membrane protein span at residues 21 to 41 (ILLTLVFSGLLIWSVVLVSFS). Residues 42-537 (NDFNNQLLVA…NDGLKLFDEL (496 aa)) are Lumenal-facing. N-linked (GlcNAc...) asparagine glycosylation is found at asparagine 54, asparagine 231, and asparagine 378.

Belongs to the glycosyltransferase 37 family. In terms of tissue distribution, expressed in roots and flowers.

The protein localises to the golgi apparatus. It localises to the golgi stack membrane. It participates in protein modification; protein glycosylation. May be involved in cell wall biosynthesis. May act as a fucosyltransferase. The polypeptide is Fucosyltransferase 6 (FUT6) (Arabidopsis thaliana (Mouse-ear cress)).